We begin with the raw amino-acid sequence, 257 residues long: tRNA pseudouridine synthase A (257 aa).

The active-site Nucleophile is Asp52. Residue Tyr111 coordinates substrate.

It belongs to the tRNA pseudouridine synthase TruA family. As to quaternary structure, homodimer.

The enzyme catalyses uridine(38/39/40) in tRNA = pseudouridine(38/39/40) in tRNA. Its function is as follows. Formation of pseudouridine at positions 38, 39 and 40 in the anticodon stem and loop of transfer RNAs. The protein is tRNA pseudouridine synthase A of Dinoroseobacter shibae (strain DSM 16493 / NCIMB 14021 / DFL 12).